Here is a 413-residue protein sequence, read N- to C-terminus: Tyrosine--tRNA ligase (413 aa).

The 'HIGH' region signature appears at 57–66; sequence PTAPDIHLGH. Residues 241-245 carry the 'KMSKS' region motif; sequence KMSKS. Lys244 is an ATP binding site. The S4 RNA-binding domain occupies 351 to 412; that stretch reads VWLPRLMVQA…GKRKFARLHT (62 aa).

It belongs to the class-I aminoacyl-tRNA synthetase family. TyrS type 2 subfamily. In terms of assembly, homodimer.

The protein localises to the cytoplasm. The enzyme catalyses tRNA(Tyr) + L-tyrosine + ATP = L-tyrosyl-tRNA(Tyr) + AMP + diphosphate + H(+). Functionally, catalyzes the attachment of tyrosine to tRNA(Tyr) in a two-step reaction: tyrosine is first activated by ATP to form Tyr-AMP and then transferred to the acceptor end of tRNA(Tyr). The polypeptide is Tyrosine--tRNA ligase (Moorella thermoacetica (strain ATCC 39073 / JCM 9320)).